The chain runs to 163 residues: Keratin-associated protein 11-1 (163 aa).

4 tandem repeats follow at residues 111–120 (CQPLGGISSV), 121–130 (CQPVGGISTV), 131–140 (CQPVGGVSTV), and 141–150 (CQPACGVSRT). The tract at residues 111–150 (CQPLGGISSVCQPVGGISTVCQPVGGVSTVCQPACGVSRT) is 4 X 10 AA approximate repeats.

This sequence belongs to the PMG family. Expressed in the upper matrix and in the entire hair cortex.

In the hair cortex, hair keratin intermediate filaments are embedded in an interfilamentous matrix, consisting of hair keratin-associated proteins (KRTAP), which are essential for the formation of a rigid and resistant hair shaft through their extensive disulfide bond cross-linking with abundant cysteine residues of hair keratins. The matrix proteins include the high-sulfur and high-glycine-tyrosine keratins. This Homo sapiens (Human) protein is Keratin-associated protein 11-1 (KRTAP11-1).